Reading from the N-terminus, the 248-residue chain is Cytochrome c oxidase subunit 2 (248 aa).

Topologically, residues 1 to 36 (MLFFNSILNDAPSSWALYFQDGASPSYLGVTHLNDY) are mitochondrial intermembrane. The chain crosses the membrane as a helical span at residues 37 to 57 (LMFYLTFIFIGVIYAICKAVI). Over 58 to 75 (EYNYNSHPIAAKYTTHGS) the chain is Mitochondrial matrix. Residues 76–100 (IVEFIWTLIPALILILVALPSFKLL) form a helical membrane-spanning segment. Over 101–248 (YLLDEVQKPS…DFLAWLEENS (148 aa)) the chain is Mitochondrial intermembrane. Residues His182, Cys217, Glu219, Cys221, His225, and Met228 each contribute to the Cu cation site. Glu219 is a Mg(2+) binding site.

The protein belongs to the cytochrome c oxidase subunit 2 family. As to quaternary structure, component of the cytochrome c oxidase (complex IV, CIV), a multisubunit enzyme composed of a catalytic core of 3 subunits and several supernumerary subunits. The complex exists as a monomer or a dimer and forms supercomplexes (SCs) in the inner mitochondrial membrane with ubiquinol-cytochrome c oxidoreductase (cytochrome b-c1 complex, complex III, CIII). Cu cation is required as a cofactor.

The protein localises to the mitochondrion inner membrane. It catalyses the reaction 4 Fe(II)-[cytochrome c] + O2 + 8 H(+)(in) = 4 Fe(III)-[cytochrome c] + 2 H2O + 4 H(+)(out). In terms of biological role, component of the cytochrome c oxidase, the last enzyme in the mitochondrial electron transport chain which drives oxidative phosphorylation. The respiratory chain contains 3 multisubunit complexes succinate dehydrogenase (complex II, CII), ubiquinol-cytochrome c oxidoreductase (cytochrome b-c1 complex, complex III, CIII) and cytochrome c oxidase (complex IV, CIV), that cooperate to transfer electrons derived from NADH and succinate to molecular oxygen, creating an electrochemical gradient over the inner membrane that drives transmembrane transport and the ATP synthase. Cytochrome c oxidase is the component of the respiratory chain that catalyzes the reduction of oxygen to water. Electrons originating from reduced cytochrome c in the intermembrane space (IMS) are transferred via the dinuclear copper A center (CU(A)) of subunit 2 and heme A of subunit 1 to the active site in subunit 1, a binuclear center (BNC) formed by heme A3 and copper B (CU(B)). The BNC reduces molecular oxygen to 2 water molecules using 4 electrons from cytochrome c in the IMS and 4 protons from the mitochondrial matrix. This is Cytochrome c oxidase subunit 2 (cox2) from Schizosaccharomyces pombe (strain 972 / ATCC 24843) (Fission yeast).